Consider the following 104-residue polypeptide: Flagellar hook-basal body complex protein FliE (104 aa).

Belongs to the FliE family.

Its subcellular location is the bacterial flagellum basal body. This Salmonella newport (strain SL254) protein is Flagellar hook-basal body complex protein FliE.